Here is a 254-residue protein sequence, read N- to C-terminus: Diphthine synthase (254 aa).

S-adenosyl-L-methionine contacts are provided by residues Leu11, Asp86, Ile89, 114–115 (SV), Leu166, Leu207, and His232.

The protein belongs to the diphthine synthase family. In terms of assembly, homodimer.

It carries out the reaction 2-[(3S)-amino-3-carboxypropyl]-L-histidyl-[translation elongation factor 2] + 3 S-adenosyl-L-methionine = diphthine-[translation elongation factor 2] + 3 S-adenosyl-L-homocysteine + 3 H(+). The protein operates within protein modification; peptidyl-diphthamide biosynthesis. Its function is as follows. S-adenosyl-L-methionine-dependent methyltransferase that catalyzes the trimethylation of the amino group of the modified target histidine residue in translation elongation factor 2 (EF-2), to form an intermediate called diphthine. The three successive methylation reactions represent the second step of diphthamide biosynthesis. This is Diphthine synthase from Sulfurisphaera tokodaii (strain DSM 16993 / JCM 10545 / NBRC 100140 / 7) (Sulfolobus tokodaii).